The primary structure comprises 428 residues: UDP-N-acetylglucosamine 1-carboxyvinyltransferase 2 (428 aa).

Residue 22-23 participates in phosphoenolpyruvate binding; it reads KN. Arg92 is a UDP-N-acetyl-alpha-D-glucosamine binding site. Catalysis depends on Cys116, which acts as the Proton donor. Cys116 carries the 2-(S-cysteinyl)pyruvic acid O-phosphothioketal modification. Residues 121–125, Asp304, and Ile326 each bind UDP-N-acetyl-alpha-D-glucosamine; that span reads RPIDQ.

The protein belongs to the EPSP synthase family. MurA subfamily.

It is found in the cytoplasm. The enzyme catalyses phosphoenolpyruvate + UDP-N-acetyl-alpha-D-glucosamine = UDP-N-acetyl-3-O-(1-carboxyvinyl)-alpha-D-glucosamine + phosphate. It participates in cell wall biogenesis; peptidoglycan biosynthesis. Its function is as follows. Cell wall formation. Adds enolpyruvyl to UDP-N-acetylglucosamine. This Shouchella clausii (strain KSM-K16) (Alkalihalobacillus clausii) protein is UDP-N-acetylglucosamine 1-carboxyvinyltransferase 2.